The chain runs to 193 residues: Dihydrofolate reductase (193 aa).

The DHFR domain occupies 1–193 (MIKLVFRYSP…VTTLTESVYK (193 aa)). NADP(+) is bound by residues Arg7, 22–27 (FGLGDG), 52–55 (GAKT), and 73–77 (DLARD).

The protein belongs to the dihydrofolate reductase family.

The catalysed reaction is (6S)-5,6,7,8-tetrahydrofolate + NADP(+) = 7,8-dihydrofolate + NADPH + H(+). It functions in the pathway cofactor biosynthesis; tetrahydrofolate biosynthesis; 5,6,7,8-tetrahydrofolate from 7,8-dihydrofolate: step 1/1. Key enzyme in folate metabolism. Catalyzes an essential reaction for de novo glycine and purine synthesis, and for DNA precursor synthesis. This Escherichia coli (Bacteriophage T4) protein is Dihydrofolate reductase (frd).